We begin with the raw amino-acid sequence, 389 residues long: Large envelope protein (389 aa).

Met-1 is modified (N-acetylmethionine). A lipid anchor (N-myristoyl glycine; by host) is attached at Gly-2. Residues 2–108 form a pre-S1 region; that stretch reads GTNLSVPNPL…PPLRDTHPQA (107 aa). Positions 2 to 163 are pre-S; it reads GTNLSVPNPL…LSKTGDPVPN (162 aa). Topologically, residues 2–170 are virion surface; in external conformation; it reads GTNLSVPNPL…VPNMENIASG (169 aa). At 2-242 the chain is on the intravirion; in internal conformation side; the sequence is GTNLSVPNPL…PGYRWMCLRR (241 aa). The tract at residues 73–107 is disordered; the sequence is ILTSVPAAPPPASTNRQSGRQPTPLSPPLRDTHPQ. Over residues 85–95 the composition is skewed to polar residues; that stretch reads STNRQSGRQPT. A pre-S2 region spans residues 109–163; the sequence is MQWNSTTFHQTLQDPRVRALYFPAGGSSSGTVSPAQNTVSAISSILSKTGDPVPN. The helical transmembrane segment at 171-191 threads the bilayer; sequence LLGPLLVLQAGFFLLTKILTI. Over 192 to 242 the chain is Intravirion; in external conformation; that stretch reads PQSLDSWWTSLNFLGGTPVCLGQNSQSQISSHSPTCCPPICPGYRWMCLRR. Residues 243 to 263 traverse the membrane as a helical segment; it reads FIIFLCILLLCLIFLLVLLDY. The Virion surface segment spans residues 264-337; sequence QGMLPVCPLI…WASVRFSWLS (74 aa). Asn-309 is a glycosylation site (N-linked (GlcNAc...) asparagine; by host). Residues 338–358 form a helical membrane-spanning segment; that stretch reads LLVPFVQWFVGLSPTVWLSVI. The Intravirion segment spans residues 359–364; that stretch reads WMMWYW. Residues 365 to 387 traverse the membrane as a helical segment; sequence GPSLYNILSPFMPLLPIFFCLWV. Residues 388 to 389 are Virion surface-facing; the sequence is YI.

The protein belongs to the orthohepadnavirus major surface antigen family. In terms of assembly, interacts (via its myristoylated pre-S1 region) with the host SLC10A1/NTCP; this interaction is essential for viral entry. As to quaternary structure, in its internal form (Li-HBsAg), interacts with the capsid protein and with the isoform S. Interacts with host chaperone CANX. Associates with host chaperone CANX through its pre-S2 N glycan; this association may be essential for isoform M proper secretion. In terms of assembly, interacts with isoform L. Interacts with the antigens of satellite virus HDV (HDVAgs); this interaction is required for encapsidation of HDV genomic RNA. Isoform M is N-terminally acetylated by host at a ratio of 90%, and N-glycosylated by host at the pre-S2 region. Post-translationally, myristoylated; this modification is essential for its interaction with the host protein SLC10A1/NTCP.

It localises to the virion membrane. Its function is as follows. The large envelope protein exists in two topological conformations, one which is termed 'external' or Le-HBsAg and the other 'internal' or Li-HBsAg. In its external conformation the protein attaches the virus to cell receptors and thereby initiating infection. This interaction determines the species specificity and liver tropism. This attachment induces virion internalization predominantly through caveolin-mediated endocytosis. The large envelope protein also assures fusion between virion membrane and endosomal membrane. In its internal conformation the protein plays a role in virion morphogenesis and mediates the contact with the nucleocapsid like a matrix protein. Functionally, the middle envelope protein plays an important role in the budding of the virion. It is involved in the induction of budding in a nucleocapsid independent way. In this process the majority of envelope proteins bud to form subviral lipoprotein particles of 22 nm of diameter that do not contain a nucleocapsid. In Hepatitis B virus genotype B1 subtype adw (isolate Japan/pJDW233/1988) (HBV-B), this protein is Large envelope protein.